Here is a 406-residue protein sequence, read N- to C-terminus: Succinylornithine transaminase (406 aa).

Residue lysine 252 is modified to N6-(pyridoxal phosphate)lysine.

This sequence belongs to the class-III pyridoxal-phosphate-dependent aminotransferase family. AstC subfamily. The cofactor is pyridoxal 5'-phosphate.

The catalysed reaction is N(2)-succinyl-L-ornithine + 2-oxoglutarate = N-succinyl-L-glutamate 5-semialdehyde + L-glutamate. It functions in the pathway amino-acid degradation; L-arginine degradation via AST pathway; L-glutamate and succinate from L-arginine: step 3/5. In terms of biological role, catalyzes the transamination of N(2)-succinylornithine and alpha-ketoglutarate into N(2)-succinylglutamate semialdehyde and glutamate. Can also act as an acetylornithine aminotransferase. The sequence is that of Succinylornithine transaminase from Citrobacter koseri (strain ATCC BAA-895 / CDC 4225-83 / SGSC4696).